The sequence spans 120 residues: Hydrogenase maturation factor HypA (120 aa).

Ni(2+) is bound at residue His-2. Positions 73, 76, 89, and 92 each coordinate Zn(2+).

The protein belongs to the HypA/HybF family.

Its function is as follows. Involved in the maturation of [NiFe] hydrogenases. Required for nickel insertion into the metal center of the hydrogenase. This Deinococcus radiodurans (strain ATCC 13939 / DSM 20539 / JCM 16871 / CCUG 27074 / LMG 4051 / NBRC 15346 / NCIMB 9279 / VKM B-1422 / R1) protein is Hydrogenase maturation factor HypA.